A 172-amino-acid chain; its full sequence is MRLPNILLTGTPGVGKTTLGKELASRSGLKYVNVGDLAREGELYDGFDEEYNCPILDEDRVIDELDTQMRDGGVIVDYHGCDFFPERWFHIVFVLRTETSVLYKRLETRGYSEKKLNDNIQCEIFQVLYEEAMESYKEEIVHQLPSNKPEELEENISQILKWIEQWIKDHNS.

5 residues coordinate ATP: glycine 13, glycine 15, lysine 16, threonine 17, and threonine 18. The segment at 33–56 (NVGDLAREGELYDGFDEEYNCPIL) is NMPbind. An LID region spans residues 108 to 118 (TRGYSEKKLND). The ATP site is built by arginine 109 and lysine 148.

This sequence belongs to the adenylate kinase family. AK6 subfamily. Monomer and homodimer. Interacts with small ribosomal subunit protein uS11. Not a structural component of 43S pre-ribosomes, but transiently interacts with them by binding to uS11. Interacts with COIL (via C-terminus).

It localises to the cytoplasm. The protein localises to the nucleus. It is found in the nucleoplasm. Its subcellular location is the cajal body. It catalyses the reaction AMP + ATP = 2 ADP. The catalysed reaction is ATP + H2O = ADP + phosphate + H(+). In terms of biological role, broad-specificity nucleoside monophosphate (NMP) kinase that catalyzes the reversible transfer of the terminal phosphate group between nucleoside triphosphates and monophosphates. Also has ATPase activity. Involved in the late cytoplasmic maturation steps of the 40S ribosomal particles, specifically 18S rRNA maturation. While NMP activity is not required for ribosome maturation, ATPase activity is. Associates transiently with small ribosomal subunit protein uS11. ATP hydrolysis breaks the interaction with uS11. May temporarily remove uS11 from the ribosome to enable a conformational change of the ribosomal RNA that is needed for the final maturation step of the small ribosomal subunit. Its NMP activity may have a role in nuclear energy homeostasis. May be involved in regulation of Cajal body (CB) formation. The protein is Adenylate kinase isoenzyme 6 of Oryctolagus cuniculus (Rabbit).